The following is a 234-amino-acid chain: tRNA (guanine-N(1)-)-methyltransferase (234 aa).

S-adenosyl-L-methionine-binding positions include glycine 115 and 135-140; that span reads VGDYIL.

Belongs to the RNA methyltransferase TrmD family. In terms of assembly, homodimer.

It is found in the cytoplasm. It catalyses the reaction guanosine(37) in tRNA + S-adenosyl-L-methionine = N(1)-methylguanosine(37) in tRNA + S-adenosyl-L-homocysteine + H(+). Its function is as follows. Specifically methylates guanosine-37 in various tRNAs. The chain is tRNA (guanine-N(1)-)-methyltransferase from Rickettsia africae (strain ESF-5).